The primary structure comprises 446 residues: Transcription factor SOX-8 (446 aa).

3 disordered regions span residues 1 to 58, 155 to 259, and 318 to 378; these read MLDM…DPAE, AERL…RQNI, and HKSA…PFAG. The segment covering 40-53 has biased composition (gly residues); sequence EGLGRAGVAVGGAR. The interval 58 to 100 is dimerization (DIM); sequence EAADERFPACIRDAVSQVLKGYDWSLVPMPVRGGGGGALKAKP. Positions 102–170 form a DNA-binding region, HMG box; it reads VKRPMNAFMV…QHKKDHPDYK (69 aa). Basic and acidic residues-rich tracts occupy residues 155 to 171, 210 to 219, and 242 to 253; these read AERL…DYKY, DGHHHGDHTG, and PELKLEGRRPVD. The tract at residues 224 to 298 is transactivation domain (TAM); that stretch reads PPTPPTTPKT…LPLGGPAPPE (75 aa). The tract at residues 335-446 is transactivation domain (TAC); the sequence is RPHIKTEQPS…QPVYTTLTRP (112 aa). The span at 362–378 shows a compositional bias: low complexity; that stretch reads SGQSSATPAAPAGPFAG. The 9aaTAD signature appears at 400 to 408; the sequence is PGLYQYPCF. The segment at 425-446 is disordered; the sequence is LPPAHSPTSHWDQPVYTTLTRP. The span at 430–446 shows a compositional bias: polar residues; sequence SPTSHWDQPVYTTLTRP.

Its subcellular location is the nucleus. Functionally, transcription factor that may play a role in central nervous system, limb and facial development. May be involved in male sex determination. Binds the consensus motif 5'-[AT][AT]CAA[AT]G-3'. This Homo sapiens (Human) protein is Transcription factor SOX-8.